Reading from the N-terminus, the 809-residue chain is LPS-assembly protein LptD (809 aa).

Residues 1–22 form the signal peptide; sequence MRRALRLLPLPLSIAICLPAMA.

Belongs to the LptD family. As to quaternary structure, component of the lipopolysaccharide transport and assembly complex. Interacts with LptE and LptA.

It localises to the cell outer membrane. Its function is as follows. Together with LptE, is involved in the assembly of lipopolysaccharide (LPS) at the surface of the outer membrane. This is LPS-assembly protein LptD from Xanthomonas euvesicatoria pv. vesicatoria (strain 85-10) (Xanthomonas campestris pv. vesicatoria).